Reading from the N-terminus, the 95-residue chain is CRISPR-associated endoribonuclease Cas2 (95 aa).

Residue aspartate 10 participates in Mg(2+) binding.

The protein belongs to the CRISPR-associated endoribonuclease Cas2 protein family. Homodimer, forms a heterotetramer with a Cas1 homodimer. Mg(2+) is required as a cofactor.

In terms of biological role, CRISPR (clustered regularly interspaced short palindromic repeat), is an adaptive immune system that provides protection against mobile genetic elements (viruses, transposable elements and conjugative plasmids). CRISPR clusters contain sequences complementary to antecedent mobile elements and target invading nucleic acids. CRISPR clusters are transcribed and processed into CRISPR RNA (crRNA). Functions as a ssRNA-specific endoribonuclease. Involved in the integration of spacer DNA into the CRISPR cassette. The polypeptide is CRISPR-associated endoribonuclease Cas2 (Geobacter sulfurreducens (strain ATCC 51573 / DSM 12127 / PCA)).